The chain runs to 248 residues: MKSYIEPFIASKALSQNSQKAYRYDLQQFCQLVGERVNQDKLLLYQNSIANLSLSAKKRKLSTANQFLYYLYQIKYLNSYFRLTDTMKVMRTEKQQAAIINTDIFYQKTPFVWGQLISLLILELGLTPSEVAGIEVANLDLSFQMLTLKTKKGVRVLPLSQILIPFLEQQLIGKEVYLFEHRGIPFSRQWFFNHLKTFVRSIGYEGLTAQKLREQFILKEKLAGKSIIELSDILGLKSPVTLEKYYKS.

The 72-residue stretch at 1 to 72 (MKSYIEPFIA…TANQFLYYLY (72 aa)) folds into the Core-binding (CB) domain. Positions 85-248 (DTMKVMRTEK…PVTLEKYYKS (164 aa)) constitute a Tyr recombinase domain. Catalysis depends on residues Lys-149 and Arg-213. Tyr-245 (O-(3'-phospho-DNA)-tyrosine intermediate) is an active-site residue.

The protein belongs to the 'phage' integrase family. XerD-like subfamily.

The protein resides in the cytoplasm. Putative tyrosine recombinase. Not involved in the cutting and rejoining of the recombining DNA molecules on dif(SL) site. This is Tyrosine recombinase XerD-like from Streptococcus pyogenes serotype M3 (strain ATCC BAA-595 / MGAS315).